The chain runs to 496 residues: Glutamyl-tRNA(Gln) amidotransferase subunit A (496 aa).

Active-site charge relay system residues include lysine 75 and serine 150. Residue serine 174 is the Acyl-ester intermediate of the active site.

This sequence belongs to the amidase family. GatA subfamily. Heterotrimer of A, B and C subunits.

It carries out the reaction L-glutamyl-tRNA(Gln) + L-glutamine + ATP + H2O = L-glutaminyl-tRNA(Gln) + L-glutamate + ADP + phosphate + H(+). Functionally, allows the formation of correctly charged Gln-tRNA(Gln) through the transamidation of misacylated Glu-tRNA(Gln) in organisms which lack glutaminyl-tRNA synthetase. The reaction takes place in the presence of glutamine and ATP through an activated gamma-phospho-Glu-tRNA(Gln). This chain is Glutamyl-tRNA(Gln) amidotransferase subunit A, found in Burkholderia ambifaria (strain MC40-6).